Reading from the N-terminus, the 1487-residue chain is Chromosome partition protein MukB (1487 aa).

34–41 (GGNGAGKS) contributes to the ATP binding site. 5 coiled-coil regions span residues 297 to 426 (SSRE…LEKA), 460 to 666 (ALKH…RLAS), 781 to 806 (RAAR…AKAA), 836 to 1111 (EQAL…RTFV), and 1210 to 1266 (VEAI…LSNI). Positions 667 to 784 (PGGSNDPRLK…VIPLFGRAAR (118 aa)) are flexible hinge.

This sequence belongs to the SMC family. MukB subfamily. In terms of assembly, homodimerization via its hinge domain. Binds to DNA via its C-terminal region. Interacts, and probably forms a ternary complex, with MukE and MukF via its C-terminal region. The complex formation is stimulated by calcium or magnesium. Interacts with tubulin-related protein FtsZ.

It is found in the cytoplasm. The protein resides in the nucleoid. Its function is as follows. Plays a central role in chromosome condensation, segregation and cell cycle progression. Functions as a homodimer, which is essential for chromosome partition. Involved in negative DNA supercoiling in vivo, and by this means organize and compact chromosomes. May achieve or facilitate chromosome segregation by condensation DNA from both sides of a centrally located replisome during cell division. The protein is Chromosome partition protein MukB of Vibrio vulnificus (strain YJ016).